The sequence spans 355 residues: MASRQAPLCGLAPCCLWLLGVVLLMNASARPANHSSARERAGNREENEILPPDHLNGVKLEMDGHLNKDFHQEVFLGKDMDDFEEDAEPRKSRRKLMVIFSKVDLNTDRRISAKEMQKWIMQKTAEHFQEAVAESRAHFRAVDPDGDGHVSWDEYKVKFLATKGHNEREVAEKIKNKWDLNIDEETQEVLENLKDRWYQADNPPPDLLLTESEFLSFLHPEHSRGMLQFMVKEIIRDLDQDGDKKLSLSEFISLPVGTVENQQGQDVDDSWVRDRKREFEELIDANHDGIVTMAELEDYMDPMNEFSALNEAKQMIAIADENQNHYLEPEEVLKYSEFFTGSKLVDYARSVHEEF.

Residues 1 to 29 (MASRQAPLCGLAPCCLWLLGVVLLMNASA) form the signal peptide. The N-linked (GlcNAc...) asparagine glycan is linked to N33. EF-hand domains follow at residues 91–126 (KSRR…KTAE) and 130–165 (EAVA…TKGH). A Phosphoserine modification is found at S92. Residues D104, N106, D108, R110, E115, D143, D145, D147, H149, and E154 each coordinate Ca(2+). Residues T186 and T210 each carry the phosphothreonine modification. EF-hand domains lie at 226-261 (MLQF…TVEN), 271-306 (WVRD…MNEF), and 307-342 (SALN…FTGS). Residues D239, D241, D243, K245, and E250 each coordinate Ca(2+). At T258 the chain carries Phosphothreonine. Ca(2+) contacts are provided by D284, N286, and D288. T292 is subject to Phosphothreonine. The Ca(2+) site is built by E295, D320, N322, N324, Y326, and E331. The interval 302 to 355 (PMNEFSALNEAKQMIAIADENQNHYLEPEEVLKYSEFFTGSKLVDYARSVHEEF) is necessary for intracellular retention in Golgi apparatus lumen.

It belongs to the CREC family.

The protein resides in the golgi apparatus lumen. May regulate calcium-dependent activities in the endoplasmic reticulum lumen or post-ER compartment. This is 45 kDa calcium-binding protein (SDF4) from Bos taurus (Bovine).